We begin with the raw amino-acid sequence, 165 residues long: uncharacterized protein (165 aa).

Residues 16 to 36 (ASISSILNFFFFYIMEYFVAV) form a helical membrane-spanning segment.

The protein belongs to the asfivirus F165R family.

It localises to the host membrane. This is an uncharacterized protein from Ornithodoros (relapsing fever ticks).